A 308-amino-acid polypeptide reads, in one-letter code: Glutaminase (308 aa).

Substrate-binding residues include Ser66, Asn117, Glu161, Asn168, Tyr192, Tyr244, and Val262.

This sequence belongs to the glutaminase family. In terms of assembly, homotetramer.

It carries out the reaction L-glutamine + H2O = L-glutamate + NH4(+). This chain is Glutaminase, found in Shigella dysenteriae serotype 1 (strain Sd197).